The primary structure comprises 391 residues: MKGPCEVQKNEDQEGEAAATGPQAETLEAERSWTADSHSALEAEGTHGLGERVMATLYLKSCRANSVVPVSCLLRQEGASELNLRHRGLGPQGVRALASVLTSNPYIKRLDLRDNGLCGAGAEALADVLRKNSIISDVDLSENQIGAAGLQAICTALALNPTVEKMQLQGNRLEEQAAQHLAALLLHHRGLKSLDLSYNQLNDLAGEILGPAVAENTGLTELNLSWNHLRGLGATAFARGLEANIFLKVLDISHNGFGDSGASAIGDALRVNNVLEELNMRNNRISVSGALKLGLGLQVNQTLRILIISKNPIRSDGCVGLLKSVRNNKSSALELLDVSDIQVSRECEDLASSMSEILPGLCIKRYTSRRKDWPQASTPSQPASAPSDSGL.

The tract at residues 1–38 (MKGPCEVQKNEDQEGEAAATGPQAETLEAERSWTADSH) is disordered. Positions 28–38 (EAERSWTADSH) are enriched in basic and acidic residues. LRR repeat units follow at residues 106–126 (YIKR…EALA), 134–154 (IISD…QAIC), 162–182 (TVEK…QHLA), 190–211 (GLKS…ILGP), 218–239 (GLTE…AFAR), 246–259 (FLKV…GFGD), 274–294 (VLEE…LKLG), 302–323 (TLRI…GLLK), and 332–354 (ALEL…ASSM). A disordered region spans residues 371–391 (KDWPQASTPSQPASAPSDSGL). A compositionally biased stretch (low complexity) spans 374-391 (PQASTPSQPASAPSDSGL).

The protein is Leucine-rich repeat-containing protein 74B of Mus musculus (Mouse).